Reading from the N-terminus, the 216-residue chain is Glutathione S-transferase 1, isoform B (216 aa).

Positions 1–80 constitute a GST N-terminal domain; the sequence is MDFYYLPGSA…YLVEKYGKPC (80 aa). Residues Ser-9, 50-52, and 64-66 each bind glutathione; these read HCV and ESR. In terms of domain architecture, GST C-terminal spans 89–210; that stretch reads DPQKRAIVNQ…RSWAEAARPF (122 aa).

Belongs to the GST superfamily. Theta family. As to quaternary structure, homodimer.

It catalyses the reaction RX + glutathione = an S-substituted glutathione + a halide anion + H(+). Functionally, conjugation of reduced glutathione to a wide number of exogenous and endogenous hydrophobic electrophiles. The chain is Glutathione S-transferase 1, isoform B from Anopheles gambiae (African malaria mosquito).